Reading from the N-terminus, the 419-residue chain is Argininosuccinate synthase (419 aa).

Residues 9–17 (AYSGGLDTS) and Ala35 each bind ATP. The L-citrulline site is built by Tyr86 and Ser91. ATP is bound at residue 114–122 (AHGATGKGN). Positions 118, 122, and 123 each coordinate L-aspartate. Asn122 provides a ligand contact to L-citrulline. L-citrulline is bound by residues Arg126, Ser179, Ser188, Glu270, and Tyr282.

This sequence belongs to the argininosuccinate synthase family. Type 1 subfamily. As to quaternary structure, homotetramer.

It catalyses the reaction L-citrulline + L-aspartate + ATP = 2-(N(omega)-L-arginino)succinate + AMP + diphosphate + H(+). Its pathway is amino-acid biosynthesis; L-arginine biosynthesis; L-arginine from L-ornithine and carbamoyl phosphate: step 2/3. The protein operates within nitrogen metabolism; urea cycle; (N(omega)-L-arginino)succinate from L-aspartate and L-citrulline: step 1/1. The sequence is that of Argininosuccinate synthase from Drosophila melanogaster (Fruit fly).